Reading from the N-terminus, the 370-residue chain is 3-dehydroquinate synthase (370 aa).

Residues 112–116 (GVVGD), 136–137 (TS), Lys-149, Lys-158, and 176–179 (TLRT) contribute to the NAD(+) site. Zn(2+)-binding residues include Glu-191, His-254, and His-276.

Belongs to the sugar phosphate cyclases superfamily. Dehydroquinate synthase family. Requires Co(2+) as cofactor. The cofactor is Zn(2+). NAD(+) is required as a cofactor.

The protein localises to the cytoplasm. It carries out the reaction 7-phospho-2-dehydro-3-deoxy-D-arabino-heptonate = 3-dehydroquinate + phosphate. It participates in metabolic intermediate biosynthesis; chorismate biosynthesis; chorismate from D-erythrose 4-phosphate and phosphoenolpyruvate: step 2/7. Its function is as follows. Catalyzes the conversion of 3-deoxy-D-arabino-heptulosonate 7-phosphate (DAHP) to dehydroquinate (DHQ). This Xanthomonas campestris pv. campestris (strain 8004) protein is 3-dehydroquinate synthase.